We begin with the raw amino-acid sequence, 344 residues long: Peroxidase 36 (344 aa).

An N-terminal signal peptide occupies residues 1 to 28 (MNTKTVKSMAGIVLSQISLVALFPLCIC). Intrachain disulfides connect Cys-50–Cys-130, Cys-83–Cys-88, Cys-136–Cys-337, and Cys-215–Cys-247. His-81 acts as the Proton acceptor in catalysis. Positions 82, 85, 87, 89, and 91 each coordinate Ca(2+). Position 178 (Pro-178) interacts with substrate. A heme b-binding site is contributed by His-208. Thr-209 contacts Ca(2+). An N-linked (GlcNAc...) asparagine glycan is attached at Asn-224. Ca(2+) is bound by residues Asp-260, Thr-263, and Asp-268.

The protein belongs to the peroxidase family. Classical plant (class III) peroxidase subfamily. It depends on heme b as a cofactor. Ca(2+) is required as a cofactor.

It is found in the secreted. The enzyme catalyses 2 a phenolic donor + H2O2 = 2 a phenolic radical donor + 2 H2O. In terms of biological role, removal of H(2)O(2), oxidation of toxic reductants, biosynthesis and degradation of lignin, suberization, auxin catabolism, response to environmental stresses such as wounding, pathogen attack and oxidative stress. These functions might be dependent on each isozyme/isoform in each plant tissue. The sequence is that of Peroxidase 36 (PER36) from Arabidopsis thaliana (Mouse-ear cress).